Consider the following 825-residue polypeptide: IQ and AAA domain-containing protein 1-like (825 aa).

Positions Arg-206–Glu-235 constitute an IQ domain. The segment covering Gln-344–Lys-366 has biased composition (basic and acidic residues). 2 disordered regions span residues Gln-344–Lys-378 and Asp-459–Thr-487. The span at Lys-467–Lys-482 shows a compositional bias: basic residues. Gly-572 to Lys-579 provides a ligand contact to ATP.

It belongs to the AAA ATPase family.

This is IQ and AAA domain-containing protein 1-like (Iqca1l) from Mus musculus (Mouse).